A 269-amino-acid polypeptide reads, in one-letter code: Probable 3-deoxy-manno-octulosonic acid transferase (269 aa).

It localises to the cytoplasm. The enzyme catalyses an alpha-Kdo-(2-&gt;4)-alpha-Kdo-(2-&gt;6)-lipid IVA + CMP-3-deoxy-beta-D-manno-octulosonate = an alpha-Kdo-(2-&gt;4)-alpha-Kdo-(2-&gt;4)-alpha-Kdo-(2-&gt;6)-lipid IVA + CMP + H(+). It functions in the pathway bacterial outer membrane biogenesis; LPS core biosynthesis. Functionally, involved in the biosynthesis of the core oligosaccharide region of lipopolysaccharide (LPS). Required for the addition of 3-deoxy-D-manno-oct-2-ulosonic acid III (KdoIII) to the KdoII residue of the inner lipopolysaccharide core. The protein is Probable 3-deoxy-manno-octulosonic acid transferase of Salmonella typhimurium (strain LT2 / SGSC1412 / ATCC 700720).